A 47-amino-acid chain; its full sequence is Protein 0.5 (47 aa).

Residues 1–23 (MYMLTIGLLTALGLAVGASFGKA) form the signal peptide. A helical transmembrane segment spans residues 24–43 (LGVAVGSYFTACIIIGIIKG).

The protein resides in the host membrane. This is Protein 0.5 from Escherichia phage T7 (Bacteriophage T7).